A 1203-amino-acid chain; its full sequence is Plasma membrane calcium-transporting ATPase 4 (1203 aa).

The Cytoplasmic segment spans residues 1–92 (MTNPSGHNLP…NMIPPKKPKT (92 aa)). Serine 13 carries the post-translational modification Phosphoserine. Residues 93–113 (FLELVWEALQDVTLIILEIAA) form a helical membrane-spanning segment. Topologically, residues 114 to 150 (IISLVLSFYRPPGGENEICGHIVSNPEEDEEGETGWI) are extracellular. The chain crosses the membrane as a helical span at residues 151–171 (EGAAILASVIIVVFVTAFNDW). Over 172–356 (SKEKQFRGLQ…KEKSVLQGKL (185 aa)) the chain is Cytoplasmic. The tract at residues 294-319 (DDEKKKKGKKQGVSENRNKAKTQDGV) is disordered. Serine 328 and serine 334 each carry phosphoserine. A disordered region spans residues 330 to 349 (EGLDSEEKEKKASKGPKKEK). Positions 334-349 (SEEKEKKASKGPKKEK) are enriched in basic and acidic residues. Residues 357 to 376 (TRLAVQIGKAGLIMSILTVL) form a helical membrane-spanning segment. Over 377 to 409 (ILILYFVVDNFVIQRRAWLPECTPVYIQYFVKF) the chain is Extracellular. A helical transmembrane segment spans residues 410–427 (FIIGVTVLVVAVPEGLPL). The Cytoplasmic portion of the chain corresponds to 428–840 (AVTISLAYSV…MWGRNVYDSI (413 aa)). Catalysis depends on aspartate 465, which acts as the 4-aspartylphosphate intermediate. 2 residues coordinate Mg(2+): aspartate 785 and aspartate 789. The helical transmembrane segment at 841–860 (SKFLQFQLTVNVVAVIVAFS) threads the bilayer. The Extracellular portion of the chain corresponds to 861–870 (GACITQDSPL). A helical membrane pass occupies residues 871 to 891 (KAVQMLWVNLIMDTFASLALA). The Cytoplasmic portion of the chain corresponds to 892-911 (TEPPTDSLLRRRPYGRNKPL). A helical membrane pass occupies residues 912-934 (ISRTMMKNILGHAVYQLGIVFLL). Topologically, residues 935 to 952 (VFAGDKLFDIDSGRKAPL) are extracellular. Residues 953-974 (NSPPSQHYTIVFNTFVLMQLFN) form a helical membrane-spanning segment. The Cytoplasmic segment spans residues 975–993 (EINSRKIHGEKNVFAGVYR). The chain crosses the membrane as a helical span at residues 994 to 1015 (NIIFCSVVLGTFFCQILIVEVG). Topologically, residues 1016 to 1025 (GKPFSCTNLT) are extracellular. Residues 1026-1047 (MEQWMWCLFIGIGELLWGQVIS) form a helical membrane-spanning segment. Residues 1048 to 1203 (AIPTKSLKFL…SPLQSQETPV (156 aa)) are Cytoplasmic-facing. Serine 1064 and serine 1070 each carry phosphoserine. The tract at residues 1086 to 1103 (LRRGQILWVRGLNRIQTQ) is calmodulin-binding subdomain A. Threonine 1102 is subject to Phosphothreonine; by PKC. At glutamine 1103 the chain carries Phosphoserine. The calmodulin-binding subdomain B stretch occupies residues 1104-1113 (IRVVKVFHSF). Arginine 1114, aspartate 1115, isoleucine 1126, and serine 1144 each carry phosphoserine.

The protein belongs to the cation transport ATPase (P-type) (TC 3.A.3) family. Type IIB subfamily. Interacts with PDZD11. Interacts with SLC35G1 and STIM1. Interacts with calmodulin. In terms of tissue distribution, ubiquitously expressed. Not detected in liver. The highest levels are found in uterus and stomach. Isoform XA is found in uterus, brain, stomach, small intestine, colon and pancreas. Isoform XB is found in uterus, skeletal muscle, lung, kidney, spleen, stomach, small intestine and pancreas. Isoform ZA is found in testis and isoform ZB is found in testis and heart.

The protein localises to the cell membrane. It is found in the cell projection. The protein resides in the cilium. It localises to the flagellum membrane. The catalysed reaction is Ca(2+)(in) + ATP + H2O = Ca(2+)(out) + ADP + phosphate + H(+). With respect to regulation, activated by calcium/calmodulin. Calcium/calmodulin-regulated and magnesium-dependent enzyme that catalyzes the hydrolysis of ATP coupled with the transport of calcium out of the cell. By regulating sperm cell calcium homeostasis, may play a role in sperm motility. This is Plasma membrane calcium-transporting ATPase 4 from Rattus norvegicus (Rat).